The sequence spans 160 residues: Cytochrome b6-f complex subunit 4 (160 aa).

The next 3 helical transmembrane spans lie at 36–56 (LLYI…GLAV), 95–115 (LLGI…PFIE), and 131–151 (SLFL…CLPI).

The protein belongs to the cytochrome b family. PetD subfamily. In terms of assembly, the 4 large subunits of the cytochrome b6-f complex are cytochrome b6, subunit IV (17 kDa polypeptide, PetD), cytochrome f and the Rieske protein, while the 4 small subunits are PetG, PetL, PetM and PetN. The complex functions as a dimer.

It is found in the cellular thylakoid membrane. Component of the cytochrome b6-f complex, which mediates electron transfer between photosystem II (PSII) and photosystem I (PSI), cyclic electron flow around PSI, and state transitions. The chain is Cytochrome b6-f complex subunit 4 from Prochlorococcus marinus (strain NATL2A).